Here is a 256-residue protein sequence, read N- to C-terminus: 3-methyl-2-oxobutanoate hydroxymethyltransferase (256 aa).

Aspartate 42 and aspartate 86 together coordinate Mg(2+). 3-methyl-2-oxobutanoate is bound by residues 42–43, aspartate 86, and lysine 116; that span reads DS. A Mg(2+)-binding site is contributed by glutamate 118. Catalysis depends on glutamate 185, which acts as the Proton acceptor.

This sequence belongs to the PanB family. Homodecamer; pentamer of dimers. Mg(2+) is required as a cofactor.

It is found in the cytoplasm. The enzyme catalyses 3-methyl-2-oxobutanoate + (6R)-5,10-methylene-5,6,7,8-tetrahydrofolate + H2O = 2-dehydropantoate + (6S)-5,6,7,8-tetrahydrofolate. It functions in the pathway cofactor biosynthesis; (R)-pantothenate biosynthesis; (R)-pantoate from 3-methyl-2-oxobutanoate: step 1/2. Catalyzes the reversible reaction in which hydroxymethyl group from 5,10-methylenetetrahydrofolate is transferred onto alpha-ketoisovalerate to form ketopantoate. This is 3-methyl-2-oxobutanoate hydroxymethyltransferase from Prochlorococcus marinus (strain SARG / CCMP1375 / SS120).